The chain runs to 631 residues: Putative meiotic phospholipase SPO1 (631 aa).

The N-terminal stretch at 1-17 (MQKLLFVFSVLLTVVLA) is a signal peptide. Positions 24 to 67 (QCPSSPLIREAKHELCPEETLYLKKKKIKTKNKLIQFLKSLTEA) are required for lipid-binding and function in meiosis. Positions 24-631 (QCPSSPLIRE…LQCFKDYCYS (608 aa)) constitute a PLA2c domain. N-linked (GlcNAc...) asparagine glycosylation is found at Asn233, Asn293, and Asn303. The helical transmembrane segment at 376–396 (FITATSSSIFNNVLIFIWNLA) threads the bilayer. Residues Asn500, Asn536, Asn560, Asn563, and Asn572 are each glycosylated (N-linked (GlcNAc...) asparagine).

This sequence belongs to the lysophospholipase family. In terms of assembly, interacts with SPO23. Post-translationally, glycosylated.

The protein resides in the endoplasmic reticulum membrane. It is found in the nucleus membrane. Functionally, regulates spindle pole duplication in meiosis I, but not in mitosis. Required for meiosis I, meiosis II chromosome segregation and spore formation. Binds phosphatidylinositol (4)P mono- and polyphosphates. The chain is Putative meiotic phospholipase SPO1 (SPO1) from Saccharomyces cerevisiae (strain ATCC 204508 / S288c) (Baker's yeast).